The following is a 122-amino-acid chain: Large ribosomal subunit protein uL14 (122 aa).

It belongs to the universal ribosomal protein uL14 family. Part of the 50S ribosomal subunit. Forms a cluster with proteins L3 and L19. In the 70S ribosome, L14 and L19 interact and together make contacts with the 16S rRNA in bridges B5 and B8.

In terms of biological role, binds to 23S rRNA. Forms part of two intersubunit bridges in the 70S ribosome. The sequence is that of Large ribosomal subunit protein uL14 from Chlamydia muridarum (strain MoPn / Nigg).